Here is a 428-residue protein sequence, read N- to C-terminus: Histidine--tRNA ligase (428 aa).

This sequence belongs to the class-II aminoacyl-tRNA synthetase family. In terms of assembly, homodimer.

The protein resides in the cytoplasm. The catalysed reaction is tRNA(His) + L-histidine + ATP = L-histidyl-tRNA(His) + AMP + diphosphate + H(+). This chain is Histidine--tRNA ligase, found in Thermosynechococcus vestitus (strain NIES-2133 / IAM M-273 / BP-1).